A 277-amino-acid chain; its full sequence is Acetyl-coenzyme A carboxylase carboxyl transferase subunit beta (277 aa).

The region spanning 25-277 is the CoA carboxyltransferase N-terminal domain; sequence LVRRCPVCHT…DLLRLHKGES (253 aa). Residues cysteine 29, cysteine 32, cysteine 47, and cysteine 50 each coordinate Zn(2+). The segment at 29-50 adopts a C4-type zinc-finger fold; it reads CPVCHTTFLTDHWEPTRLCPAC.

The protein belongs to the AccD/PCCB family. Acetyl-CoA carboxylase is a heterohexamer composed of biotin carboxyl carrier protein (AccB), biotin carboxylase (AccC) and two subunits each of ACCase subunit alpha (AccA) and ACCase subunit beta (AccD). The cofactor is Zn(2+).

The protein localises to the cytoplasm. It catalyses the reaction N(6)-carboxybiotinyl-L-lysyl-[protein] + acetyl-CoA = N(6)-biotinyl-L-lysyl-[protein] + malonyl-CoA. It functions in the pathway lipid metabolism; malonyl-CoA biosynthesis; malonyl-CoA from acetyl-CoA: step 1/1. Functionally, component of the acetyl coenzyme A carboxylase (ACC) complex. Biotin carboxylase (BC) catalyzes the carboxylation of biotin on its carrier protein (BCCP) and then the CO(2) group is transferred by the transcarboxylase to acetyl-CoA to form malonyl-CoA. In Levilactobacillus brevis (strain ATCC 367 / BCRC 12310 / CIP 105137 / JCM 1170 / LMG 11437 / NCIMB 947 / NCTC 947) (Lactobacillus brevis), this protein is Acetyl-coenzyme A carboxylase carboxyl transferase subunit beta.